A 1020-amino-acid chain; its full sequence is Neurofilament heavy polypeptide (1020 aa).

The interval 1–100 (MMSFGGADAL…VATSRSEKEQ (100 aa)) is head. Positions 58–83 (VSASPSRFRGAGAASSTDSLDTLSNG) are disordered. Over residues 71–82 (ASSTDSLDTLSN) the composition is skewed to polar residues. Phosphoserine is present on residues serine 76 and serine 124. Residues 97–413 (EKEQLQALND…KLLEGEECRI (317 aa)) form the IF rod domain. The interval 101-132 (LQALNDRFAGYIDKVRQLEAHNRSLEGEAAAL) is coil 1A. Residues 133 to 145 (RQQQAGRSAMGEL) are linker 1. A coil 1B region spans residues 146-244 (YEREVREMRG…QEEVGELLGQ (99 aa)). The linker 12 stretch occupies residues 245–266 (IQGSGAAQAQMQAETRDALKCD). A coil 2A region spans residues 267–288 (VTSALREIRAQLEGHAVQSTLQ). Residues 289-292 (SEEW) form a linker 2 region. Residues 293–413 (FRVRLDRLSE…KLLEGEECRI (121 aa)) form a coil 2B region. Phosphoserine is present on residues serine 347 and serine 421. The tract at residues 414–1020 (GFGPIPFSLP…ATEDKAAKGK (607 aa)) is tail. The interval 456–1020 (IVEEQTEETQ…ATEDKAAKGK (565 aa)) is disordered. Acidic residues-rich tracts occupy residues 459-475 (EQTE…EEEE) and 483-498 (GKEE…EGGE). Serine 511, serine 526, serine 532, serine 540, serine 546, serine 552, serine 560, serine 566, serine 574, serine 580, serine 586, serine 594, serine 600, serine 606, serine 614, serine 620, serine 628, serine 634, serine 640, serine 648, serine 654, serine 662, serine 668, serine 676, serine 682, serine 690, serine 696, and serine 704 each carry phosphoserine. The span at 511-1020 (SPEKEAKSPV…ATEDKAAKGK (510 aa)) shows a compositional bias: basic and acidic residues. 4 repeat units span residues 525-530 (KSPAEA), 531-536 (KSPEKE), 539-544 (KSPAEV), and 545-550 (KSPEKA). Residues 525 to 826 (KSPAEAKSPE…KEEVKSPVKE (302 aa)) form a 30 X 6 AA repeats of K-S-P-[AEPV]-[EAK]-[AEVK] region. Copy 5 of the repeat occupies 559–564 (KSPPEA). A run of 2 repeats spans residues 573–578 (KSPAEV) and 579–584 (KSPEKA). A run of 2 repeats spans residues 593-598 (KSPAEA) and 599-604 (KSPEKA). Copy 10 of the repeat occupies 613-618 (KSPAEA). 4 repeat units span residues 627–632 (KSPAEV), 633–638 (KSPEKA), 639–644 (KSPTKE), and 647–652 (KSPEKA). Repeat copies occupy residues 661–666 (KSPEKA), 667–672 (KSPVKA), 675–680 (KSPEKA), 681–686 (KSPVKA), 689–694 (KSPEKA), 695–700 (KSPVKE), 703–708 (KSPEKA), 709–714 (KSPVKE), 717–722 (KSPEKA), 723–728 (KSPVKE), 737–742 (KSPVKE), and 745–750 (KSPEKA). Phosphoserine is present on residues serine 718, serine 724, and serine 738. Serine 752 and serine 763 each carry phosphoserine. Repeat unit 27 spans residues 762 to 767 (KSPEAK). Threonine 768 carries the post-translational modification Phosphothreonine. Repeat copies occupy residues 786–791 (KSPVKE), 794–799 (KSPEKA), and 821–826 (KSPVKE). A phosphoserine mark is found at serine 787, serine 795, serine 822, and serine 888.

It belongs to the intermediate filament family. Forms heterodimers with NEFL; which can further hetero-oligomerize (in vitro). Forms heterodimers with INA (in vitro). In terms of processing, there are a number of repeats of the tripeptide K-S-P, NFH is phosphorylated on a number of the serines in this motif. It is thought that phosphorylation of NFH results in the formation of interfilament cross bridges that are important in the maintenance of axonal caliber. Post-translationally, phosphorylation seems to play a major role in the functioning of the larger neurofilament polypeptides (NF-M and NF-H), the levels of phosphorylation being altered developmentally and coincidentally with a change in the neurofilament function. Phosphorylated in the head and rod regions by the PKC kinase PKN1, leading to the inhibition of polymerization.

The protein resides in the cytoplasm. Its subcellular location is the cytoskeleton. It localises to the cell projection. The protein localises to the axon. Its function is as follows. Neurofilaments usually contain three intermediate filament proteins: NEFL, NEFM, and NEFH which are involved in the maintenance of neuronal caliber. NEFH has an important function in mature axons that is not subserved by the two smaller NF proteins. May additionally cooperate with the neuronal intermediate filament proteins PRPH and INA to form neuronal filamentous networks. The sequence is that of Neurofilament heavy polypeptide (NEFH) from Homo sapiens (Human).